The following is a 407-amino-acid chain: Patatin-like protein 2 (407 aa).

The 207-residue stretch at 22–228 folds into the PNPLA domain; it reads LSIDGGGIRG…AANNPALLAI (207 aa). A GXGXXG motif is present at residues 26-31; it reads GGGIRG. The GXSXG signature appears at 64 to 68; sequence GTSTG. Ser-66 serves as the catalytic Nucleophile. Asp-215 functions as the Proton acceptor in the catalytic mechanism. The short motif at 215–217 is the DGA/G element; that stretch reads DGG. Phosphoserine is present on Ser-398.

This sequence belongs to the patatin family. In terms of tissue distribution, expressed specifically in roots.

The protein resides in the cytoplasm. In terms of biological role, possesses non-specific lipolytic acyl hydrolase (LAH) activity. Catalyzes the hydrolysis of the galactolipids monogalactosyldiacylglycerol (MGDG) and digalactosyldiacylglycerol (DGDG), and less efficiently the phoshpolipids phosphatidylcholine (PC), phosphatidylethanolamine (PE), phosphatidylglycerol (PG), phosphatidic acid (PA), phosphatidylserine (PS) and phosphatidylinositol (PI). Favors the release of fatty acid at the sn-1 position for PC or PE and the sn-2 position for PG, PA, PS and PI. Negatively affects disease resistance to the necrotic fungal pathogen Botrytis cinerea and the avirulent bacteria Pseudomonas syringae by promoting cell death and reducing the efficiency of the hypersensitive response, respectively. However, PLP2 contributes to resistance to cucumber mosaic virus (CMV), an obligate parasite inducing hypersensitive response. May negatively regulate oxylipin production, possibly via participating in membrane repair that includes removal of oxidatively modified lipids. The polypeptide is Patatin-like protein 2 (PLP2) (Arabidopsis thaliana (Mouse-ear cress)).